The following is a 380-amino-acid chain: 12-oxophytodienoate reductase 1 (380 aa).

FMN is bound by residues 35–37 (PLT), Ala-68, and Gln-110. 182-185 (HGAH) contributes to the substrate binding site. The active-site Proton donor is Tyr-187. An FMN-binding site is contributed by Arg-234. Position 275 (Arg-275) interacts with substrate. FMN-binding positions include Gly-305 and 326–327 (GR).

This sequence belongs to the NADH:flavin oxidoreductase/NADH oxidase family. FMN is required as a cofactor.

It carries out the reaction (1S,2S)-OPC-8 + NADP(+) = (9S,13S,15Z)-12-oxophyto-10,15-dienoate + NADPH + H(+). It functions in the pathway lipid metabolism; oxylipin biosynthesis. In terms of biological role, probably involved in the biosynthesis or metabolism of oxylipin signaling molecules. In vitro, reduces cis(-)-12-oxophytodienoic acid (cis(-)-OPDA) and to cis(-)-OPC-8:0. The polypeptide is 12-oxophytodienoate reductase 1 (Oryza sativa subsp. japonica (Rice)).